The sequence spans 404 residues: MSEMSYLEKLLDGVEVEWLPLGEITKYEQPTKYLVKAKDYHDTYTIPVLTAGKTFILGYTNETHGIYQASKAPVIIFDDFTTANKWVDFDFKAKSSAMKMVTSCDDNKTLLKYVYYWLNTLPSEFAEGDHKRQWISNYSQKKIPIPCPDNPEKSLAIQSEIVRILDKFTALTAELTAELNMRKKQYNYYRDQLLSFKEGEVEWKTLGEIGKWYGGGTPSKNKIEFWENGSIPWISPKDMGRTLVDSSEDYITEEAVLHSSTKLIPANSIAIVVRSSILDKVLPSALIKVPATLNQDMKAVIPHENILVKYIYHMIGSRGSDILRAAKKTGGSVASIDSKKLFSFKIPVPNINEQQRIVEILDKFDTLTNSITEGLPREIELRQKQYEYYRDLLFSFPKPETVSN.

Residues 1–153 form a target-recognition domain 1 region; the sequence is MSEMSYLEKL…PIPCPDNPEK (153 aa). Positions 154 to 199 are conserved region 1; the sequence is SLAIQSEIVRILDKFTALTAELTAELNMRKKQYNYYRDQLLSFKEG. The interval 200 to 349 is target-recognition domain 2; it reads EVEWKTLGEI…KLFSFKIPVP (150 aa). Positions 350–404 are conserved region 2; that stretch reads NINEQQRIVEILDKFDTLTNSITEGLPREIELRQKQYEYYRDLLFSFPKPETVSN.

The protein belongs to the type-I restriction system S methylase family. The type I restriction/modification system is composed of three polypeptides R, M and S; the restriction enzyme has stoichiometry R(2)M(2)S(1) while the methyltransferase is M(2)S(1). There is an equilibrium between R(2)M(2)S(1) and R(1)M(2)S(1); the latter is methylation and translocation proficient but restriction deficient. In terms of assembly, (Microbial infection) Holoenenzyme interacts with Escherichia phage T7 protein Ocr; this interaction leads to the inhibition of the restriction activity, but may still allow methylation and translocation.

The specificity (S) subunit of a type I restriction enzyme; this subunit dictates DNA sequence specificity. The presence or absence of a 4-residue repeat changes the sequence specificity; a third copy of TAEL inserted at position 179-180 changes the recognition site from 5'-GAAN(6)RTCG-3' (for EcoR124I) to 5'-GAAN(7)RTCG-3' (for EcoR124II). The M and S subunits together form a methyltransferase (MTase) that methylates A-3 on the top and bottom strand of the sequence 5'-GAAN(7)RTCG-3'. In the presence of the R subunit the complex can also act as an endonuclease, binding to the same target sequence but cutting the DNA some distance from this site. Whether the DNA is cut or modified depends on the methylation state of the target sequence. When the target site is unmodified, the DNA is cut. When the target site is hemimethylated, the complex acts as a maintenance MTase modifying the DNA so that both strands become methylated. After locating a non-methylated recognition site, the enzyme complex serves as a molecular motor that translocates DNA in an ATP-dependent manner until a collision occurs that triggers cleavage. The R(1)M(2)S(1) complex translocates an average of 555 bp/second on nicked DNA; the R(2)M(2)S(1) complex translocates at double that speed. The 2 R subunit motors are independent and track along the helical pitch of the DNA, inducing positive supercoiling ahead of themselves. The protein is Type I restriction enzyme EcoR124I/EcoR124II specificity subunit (hsdS) of Escherichia coli.